A 100-amino-acid chain; its full sequence is MRLTKREQEKMMISLAGMIAEKRKDRGLKLNQPEAVALITSRLLEGARDGKTVGELMNEGATWLTKDDVMEGIPEMIPMIQVEATFPDGTKLITVTDPIR.

It belongs to the urease gamma subunit family. Heterotrimer of UreA (gamma), UreB (beta) and UreC (alpha) subunits. Three heterotrimers associate to form the active enzyme.

It is found in the cytoplasm. It carries out the reaction urea + 2 H2O + H(+) = hydrogencarbonate + 2 NH4(+). Its pathway is nitrogen metabolism; urea degradation; CO(2) and NH(3) from urea (urease route): step 1/1. In Limosilactobacillus fermentum (Lactobacillus fermentum), this protein is Urease subunit gamma.